A 90-amino-acid chain; its full sequence is UPF0223 protein SH1855 (90 aa).

It belongs to the UPF0223 family.

This Staphylococcus haemolyticus (strain JCSC1435) protein is UPF0223 protein SH1855.